We begin with the raw amino-acid sequence, 549 residues long: Glucose-6-phosphate isomerase (549 aa).

E355 functions as the Proton donor in the catalytic mechanism. Active-site residues include H386 and K514.

Belongs to the GPI family.

It is found in the cytoplasm. The catalysed reaction is alpha-D-glucose 6-phosphate = beta-D-fructose 6-phosphate. It participates in carbohydrate biosynthesis; gluconeogenesis. It functions in the pathway carbohydrate degradation; glycolysis; D-glyceraldehyde 3-phosphate and glycerone phosphate from D-glucose: step 2/4. Catalyzes the reversible isomerization of glucose-6-phosphate to fructose-6-phosphate. The chain is Glucose-6-phosphate isomerase from Edwardsiella ictaluri (strain 93-146).